We begin with the raw amino-acid sequence, 398 residues long: Apolipoprotein L1 (398 aa).

The signal sequence occupies residues 1 to 27; it reads MEGAALLRVSVLCIWMSALFLGVGVRA. Residues 35-47 show a composition bias toward polar residues; it reads QQNVPSGTDTGDP. The disordered stretch occupies residues 35–55; it reads QQNVPSGTDTGDPQSKPLGDW. N-linked (GlcNAc...) asparagine glycosylation occurs at N261. Residues 297 to 317 form a disordered region; it reads PHASASRPRVTEPISAESGEQ. Phosphoserine; by FAM20C occurs at positions 311 and 314.

It belongs to the apolipoprotein L family. In plasma, interacts with APOA1 and mainly associated with large high density lipoprotein particles. In terms of processing, phosphorylated by FAM20C in the extracellular medium. As to expression, plasma. Found on APOA-I-containing high density lipoprotein (HDL3). Expressed in pancreas, lung, prostate, liver, placenta and spleen.

The protein localises to the secreted. May play a role in lipid exchange and transport throughout the body. May participate in reverse cholesterol transport from peripheral cells to the liver. The protein is Apolipoprotein L1 (APOL1) of Homo sapiens (Human).